Reading from the N-terminus, the 504-residue chain is MKLLEQIEKWAIETPDQTAFVWRDAKITYKQLKEDSDALAHWISSEYPDDRSPIMVYGHMQPEMIINFLGCVKAGHAYIPVDLSIPADRVQRIAENSGAKLLLSAAAVTVTDLPVRIVSEDNLKDIFFTHKGNTPNPEHAVKGDENFYIIYTSGSTGNPKGVQITYNCLVSFTQWAVEDFNLQTGQVFLNQAPFSFDLSVMDIYPSLVTGGTLWAIDKDMIARPKDLFASLEQSDIQVWTSTPSFAEMCLMEASFSESMLPNMKTFLFCGEVLPNEVARKLIERFPKATIMNTYGPTEATVAVTGIHVTEEVLDQYKSLPVGYCKSDCRLLIMKEDGTIAPDGEKGEIVIVGPSVSVGYLGSPELTEKAFTMIDGERAYKTGDAGYVENGLLFYNGRLDFQIKLHGYRMELEEIEHHLRACSYVEGAVIVPIKKGEKYDYLLAVVVPGEHSFEKEFKLTSAIKKELNERLPNYMIPRKFMYQSSIPMTPNGKVDRKKLLSEVTA.

Residue 152–153 (TS) participates in ATP binding. Asp-197 is a binding site for D-alanine. 292–297 (NTYGPT) contacts ATP. Val-301 serves as a coordination point for D-alanine. ATP contacts are provided by residues Asp-383, 394–397 (YNGR), and Lys-492. D-alanine is bound at residue Lys-492.

This sequence belongs to the ATP-dependent AMP-binding enzyme family. DltA subfamily.

It is found in the cytoplasm. The enzyme catalyses holo-[D-alanyl-carrier protein] + D-alanine + ATP = D-alanyl-[D-alanyl-carrier protein] + AMP + diphosphate. Its pathway is cell wall biogenesis; lipoteichoic acid biosynthesis. Its function is as follows. Catalyzes the first step in the D-alanylation of lipoteichoic acid (LTA), the activation of D-alanine and its transfer onto the D-alanyl carrier protein (Dcp) DltC. In an ATP-dependent two-step reaction, forms a high energy D-alanyl-AMP intermediate, followed by transfer of the D-alanyl residue as a thiol ester to the phosphopantheinyl prosthetic group of the Dcp. D-alanylation of LTA plays an important role in modulating the properties of the cell wall in Gram-positive bacteria, influencing the net charge of the cell wall. This is D-alanine--D-alanyl carrier protein ligase from Bacillus thuringiensis (strain Al Hakam).